The chain runs to 243 residues: Ribosomal RNA small subunit methyltransferase J (243 aa).

S-adenosyl-L-methionine contacts are provided by residues 112-113 and aspartate 164; that span reads ER.

This sequence belongs to the methyltransferase superfamily. RsmJ family.

It is found in the cytoplasm. It carries out the reaction guanosine(1516) in 16S rRNA + S-adenosyl-L-methionine = N(2)-methylguanosine(1516) in 16S rRNA + S-adenosyl-L-homocysteine + H(+). Specifically methylates the guanosine in position 1516 of 16S rRNA. The polypeptide is Ribosomal RNA small subunit methyltransferase J (Legionella pneumophila subsp. pneumophila (strain Philadelphia 1 / ATCC 33152 / DSM 7513)).